The primary structure comprises 40 residues: Photosystem II reaction center protein L (40 aa).

A helical membrane pass occupies residues 19–39 (SLFLGLLLVFVLGILFSSYFF).

It belongs to the PsbL family. In terms of assembly, PSII is composed of 1 copy each of membrane proteins PsbA, PsbB, PsbC, PsbD, PsbE, PsbF, PsbH, PsbI, PsbJ, PsbK, PsbL, PsbM, PsbT, PsbX, PsbY, PsbZ, Psb30/Ycf12, peripheral proteins PsbO, CyanoQ (PsbQ), PsbU, PsbV and a large number of cofactors. It forms dimeric complexes.

It localises to the cellular thylakoid membrane. In terms of biological role, one of the components of the core complex of photosystem II (PSII). PSII is a light-driven water:plastoquinone oxidoreductase that uses light energy to abstract electrons from H(2)O, generating O(2) and a proton gradient subsequently used for ATP formation. It consists of a core antenna complex that captures photons, and an electron transfer chain that converts photonic excitation into a charge separation. This subunit is found at the monomer-monomer interface and is required for correct PSII assembly and/or dimerization. In Synechococcus elongatus (strain ATCC 33912 / PCC 7942 / FACHB-805) (Anacystis nidulans R2), this protein is Photosystem II reaction center protein L.